The primary structure comprises 200 residues: NADH-quinone oxidoreductase subunit C (200 aa).

This sequence belongs to the complex I 30 kDa subunit family. As to quaternary structure, NDH-1 is composed of 14 different subunits. Subunits NuoB, C, D, E, F, and G constitute the peripheral sector of the complex.

The protein resides in the cell inner membrane. The enzyme catalyses a quinone + NADH + 5 H(+)(in) = a quinol + NAD(+) + 4 H(+)(out). Functionally, NDH-1 shuttles electrons from NADH, via FMN and iron-sulfur (Fe-S) centers, to quinones in the respiratory chain. The immediate electron acceptor for the enzyme in this species is believed to be ubiquinone. Couples the redox reaction to proton translocation (for every two electrons transferred, four hydrogen ions are translocated across the cytoplasmic membrane), and thus conserves the redox energy in a proton gradient. The chain is NADH-quinone oxidoreductase subunit C from Maricaulis maris (strain MCS10) (Caulobacter maris).